Here is a 707-residue protein sequence, read N- to C-terminus: Methionine--tRNA ligase (707 aa).

The short motif at proline 13–histidine 23 is the 'HIGH' region element. Positions 147, 150, 160, and 163 each coordinate Zn(2+). A 'KMSKS' region motif is present at residues lysine 344 to serine 348. Position 347 (lysine 347) interacts with ATP. Residues aspartate 601–histidine 707 enclose the tRNA-binding domain.

Belongs to the class-I aminoacyl-tRNA synthetase family. MetG type 1 subfamily. As to quaternary structure, homodimer. Zn(2+) serves as cofactor.

It localises to the cytoplasm. It carries out the reaction tRNA(Met) + L-methionine + ATP = L-methionyl-tRNA(Met) + AMP + diphosphate. Is required not only for elongation of protein synthesis but also for the initiation of all mRNA translation through initiator tRNA(fMet) aminoacylation. The sequence is that of Methionine--tRNA ligase from Polaromonas naphthalenivorans (strain CJ2).